We begin with the raw amino-acid sequence, 202 residues long: Putative 3-methyladenine DNA glycosylase (202 aa).

Belongs to the DNA glycosylase MPG family.

The sequence is that of Putative 3-methyladenine DNA glycosylase from Staphylococcus haemolyticus (strain JCSC1435).